We begin with the raw amino-acid sequence, 585 residues long: Glutamate decarboxylase 2 (585 aa).

Residues 1 to 24 (MASPGSGFWSFGSEDGSGDPENSG) are disordered. Phosphoserine occurs at positions 3, 6, 10, and 13. Residues Cys-30 and Cys-45 are each lipidated (S-palmitoyl cysteine). 181–183 (QLS) is a binding site for substrate. At Lys-396 the chain carries N6-(pyridoxal phosphate)lysine. Substrate is bound at residue Arg-558.

This sequence belongs to the group II decarboxylase family. In terms of assembly, homodimer. Requires pyridoxal 5'-phosphate as cofactor. Phosphorylated; which does not affect kinetic parameters or subcellular location. In terms of processing, palmitoylated; which is required for presynaptic clustering.

It is found in the cytoplasm. The protein localises to the cytosol. The protein resides in the cytoplasmic vesicle. It localises to the presynaptic cell membrane. Its subcellular location is the golgi apparatus membrane. It catalyses the reaction L-glutamate + H(+) = 4-aminobutanoate + CO2. Catalyzes the production of GABA. This Sus scrofa (Pig) protein is Glutamate decarboxylase 2 (GAD2).